The following is a 500-amino-acid chain: Na(+)/H(+) antiporter NhaB (500 aa).

The next 12 membrane-spanning stretches (helical) occupy residues 28–50 (FLLL…VLVG), 68–88 (GGLL…ALYA), 98–118 (LLLM…LLLF), 121–141 (LLLG…LAAL), 145–165 (FLDA…FFAV), 205–225 (LLMH…VGEP), 244–264 (QVAP…VLLE), 311–331 (VLIV…LLVI), 350–370 (FQEA…VAVI), 394–414 (MLFI…VATI), 449–469 (VATP…IAPL), and 477–497 (MVWM…WAVS).

Belongs to the NhaB Na(+)/H(+) (TC 2.A.34) antiporter family.

The protein resides in the cell inner membrane. It carries out the reaction 2 Na(+)(in) + 3 H(+)(out) = 2 Na(+)(out) + 3 H(+)(in). Na(+)/H(+) antiporter that extrudes sodium in exchange for external protons. The chain is Na(+)/H(+) antiporter NhaB from Pseudomonas aeruginosa (strain UCBPP-PA14).